Consider the following 196-residue polypeptide: C-type lectin domain family 3 member A (196 aa).

The first 22 residues, methionine 1 to glycine 22, serve as a signal peptide directing secretion. Disulfide bonds link cysteine 68-cysteine 78, cysteine 95-cysteine 191, and cysteine 167-cysteine 183. Residues valine 74–glutamate 192 enclose the C-type lectin domain.

Its subcellular location is the secreted. Functionally, promotes cell adhesion to laminin and fibronectin. This chain is C-type lectin domain family 3 member A (Clec3a), found in Mus musculus (Mouse).